A 471-amino-acid polypeptide reads, in one-letter code: Transcription initiation factor TFIID subunit 7-like (471 aa).

Disordered regions lie at residues 1–84, 192–211, and 328–377; these read MERG…RQGT, SPEGEPHSPPEEPVVSTGPT, and EMMG…EELE. Ser-199 is subject to Phosphoserine. The span at 347-377 shows a compositional bias: acidic residues; it reads GDDDDDEDEDDEDYGNEKEEEETDNSEEELE. The stretch at 358 to 433 forms a coiled coil; sequence EDYGNEKEEE…QKELLRKVEN (76 aa).

This sequence belongs to the TAF7 family. As to quaternary structure, TFIID is composed of TATA binding protein (TBP) and a number of TBP-associated factors (TAFs). TAF7L may replace TAF7 in a spermatogenesis-specific form of TFIID. Interacts with TBP; the interaction occurs in a sub-population of cells (pachytene and haploid round spermatids) and is developmentally regulated through differential intracellular localization of the two proteins. Interacts with TAF1. Testis-specific (at protein level). Expressed during spermatogenesis from spermatogonia stage up to the stage of round spermatids.

It localises to the nucleus. It is found in the cytoplasm. In terms of biological role, probably functions as a spermatogenesis-specific component of the DNA-binding general transcription factor complex TFIID, a multimeric protein complex that plays a central role in mediating promoter responses to various activators and repressors. May play a role in spermatogenesis. The chain is Transcription initiation factor TFIID subunit 7-like (Taf7l) from Mus musculus (Mouse).